A 193-amino-acid chain; its full sequence is uncharacterized protein (193 aa).

Positions 1–84 are disordered; sequence MTSKCSKWHE…RRSNQRIQLY (84 aa). Residues 43-78 show a composition bias toward basic residues; it reads SSPRRSSPRRSPRRSSPRRSSPRRSSPRRSSPRRSN.

It belongs to the IIV-6 378R family.

This is an uncharacterized protein from Invertebrate iridescent virus 6 (IIV-6).